Here is a 255-residue protein sequence, read N- to C-terminus: Putative oxidoreductase YtkK (255 aa).

7–14 lines the NAD(+) pocket; sequence TAGSKGLG.

It belongs to the short-chain dehydrogenases/reductases (SDR) family.

The chain is Putative oxidoreductase YtkK (ytkK) from Bacillus subtilis (strain 168).